A 674-amino-acid polypeptide reads, in one-letter code: Secretin GspD (674 aa).

Residues 1 to 24 (MKYWLKKSSWLLAGSLLSTPLAMA) form the signal peptide. Positions 25–121 (NEFSASFKGT…VLSGEERANG (97 aa)) are N0. Residues 123 to 187 (EVITQVVAVK…EIIRRVDQAG (65 aa)) form an N1 region. Positions 188 to 261 (DKEIEVVELN…LIKQLDVEMA (74 aa)) are N2. The tract at residues 264–338 (GNNRVVYLKY…AMLEVIGQLD (75 aa)) is N3. A secretin region spans residues 343–612 (QVLIEALIVE…VFIKPTIIRD (270 aa)). The segment at 395-417 (DTTQTKAVYDTNNNFLRNETTTT) is cap gate. The segment at 614-674 (VTADGITQRK…AFIEQMEAKQ (61 aa)) is s domain.

The protein belongs to the bacterial secretin family. GSP D subfamily. Forms a cylindrical channel with 15 subunits; unlike E.coli no 16-subunit channels are seen. The closed pentadeacameric channels are 195 Angstroms long and 145 Angstroms in diameter. Each subunit turns in a clock-wise manner around the channel.

Its subcellular location is the cell outer membrane. Functionally, involved in a type II secretion system (T2SS, formerly general secretion pathway, GSP) for the export of proteins. Required for secretion of cholera toxin through the outer membrane. This subunit forms the outer membrane channel. In Vibrio cholerae serotype O1 (strain ATCC 39315 / El Tor Inaba N16961), this protein is Secretin GspD (epsD).